We begin with the raw amino-acid sequence, 154 residues long: MSIELDLQLAVENEHGLPSEAEFALWLSRTITPFQPQAEVTVRIVDEAESHALNLNYRGKDKPTNVLSFPFEAPPGMEMDLLGDLVICRQVVEREAIEQNKPLQAHWAHMVVHGSLHLLGYDHIEDDEAEEMESLETEIMQEMGFTDPYLAEKE.

3 residues coordinate Zn(2+): histidine 113, histidine 117, and histidine 123.

This sequence belongs to the endoribonuclease YbeY family. Zn(2+) serves as cofactor.

The protein resides in the cytoplasm. Functionally, single strand-specific metallo-endoribonuclease involved in late-stage 70S ribosome quality control and in maturation of the 3' terminus of the 16S rRNA. In Vibrio cholerae serotype O1 (strain ATCC 39541 / Classical Ogawa 395 / O395), this protein is Endoribonuclease YbeY.